A 354-amino-acid chain; its full sequence is Tryptophan--tRNA ligase (354 aa).

ATP-binding positions include 13–15 and 21–22; these read QPT and GN. A 'HIGH' region motif is present at residues 14-22; sequence PTGNLHLGN. Residue aspartate 137 participates in L-tryptophan binding. Residues 149 to 151, valine 208, and 217 to 221 contribute to the ATP site; these read GDD and KMSKS. Residues 217-221 carry the 'KMSKS' region motif; that stretch reads KMSKS.

It belongs to the class-I aminoacyl-tRNA synthetase family. Homodimer.

It is found in the cytoplasm. It carries out the reaction tRNA(Trp) + L-tryptophan + ATP = L-tryptophyl-tRNA(Trp) + AMP + diphosphate + H(+). In terms of biological role, catalyzes the attachment of tryptophan to tRNA(Trp). The polypeptide is Tryptophan--tRNA ligase (Rhizobium meliloti (strain 1021) (Ensifer meliloti)).